Reading from the N-terminus, the 256-residue chain is Aspirochlorine biosynthesis protein F (256 aa).

Residue Asn-19 is glycosylated (N-linked (GlcNAc...) asparagine). The next 3 helical transmembrane spans lie at 21–41 (SITPHLLLVGAQILFLSGPHF), 163–183 (LVWVLLMTDLVSQMMLRFFFT), and 214–234 (FGLGPYFFINMQYLVVSILAV).

The protein resides in the membrane. Its pathway is mycotoxin biosynthesis. Its function is as follows. Part of the gene cluster that mediates the biosynthesis of aspirochlorine (or antibiotic A30641), an unusual halogenated spiro compound with distinctive antifungal properties due to selective inhibition of protein biosynthesis, and which is also active against bacteria, viruses, and murine tumor cells. The non-ribosomal peptide synthetase (NRPS) aclP is responsible the formation of the diketopiperazine (DKP) core from the condensation of 2 phenylalanine residues. One Phe residue is tailored into chlorotyrosine by hydroxylation and chlorination, whereas the second Phe undergoes an unprecedented C-C bond cleavage to be converted into glycine. After formation of the DKP, sulfur is incorporated into the DKP by conjugation with glutathione by aclG, followed by its stepwise degradation to the thiol by aclI, aclJ and aclK, and the dithiol oxidation by aclT. In addition, oxygenases (aclB, aclC, aclL and aclO) and O-methyltransferases (aclM and aclU) act as tailoring enzymes to produce the intermediate dechloroaspirochlorine. Ultimately, chlorination of dechloroaspirochlorine by the halogenase aclH is the last step in the aspirochlorine pathway. The protein is Aspirochlorine biosynthesis protein F of Aspergillus oryzae (strain ATCC 42149 / RIB 40) (Yellow koji mold).